The following is a 205-amino-acid chain: MAKKLVDDLEREGVLKSERVKKALLSVPREEFVMPEYRMMAYEDRPLPLFADATISAPHMVAMMCELIEPRPGMSILEVGTGSGYHAAVCAEAIERRGKVYTVEIVKGLAIYAAQNLERLGYWGVVEVFHSDGKRGLEKFAPYDAIIVTAAAASIPSALVNQLKDGGIMVIPVEEGFGQVLYKVVRRGEKTEKKAVTYVLFVPLR.

Serine 56 is a catalytic residue.

Belongs to the methyltransferase superfamily. L-isoaspartyl/D-aspartyl protein methyltransferase family.

It is found in the cytoplasm. It carries out the reaction [protein]-L-isoaspartate + S-adenosyl-L-methionine = [protein]-L-isoaspartate alpha-methyl ester + S-adenosyl-L-homocysteine. Functionally, catalyzes the methyl esterification of L-isoaspartyl residues in peptides and proteins that result from spontaneous decomposition of normal L-aspartyl and L-asparaginyl residues. It plays a role in the repair and/or degradation of damaged proteins. This is Protein-L-isoaspartate O-methyltransferase from Pyrobaculum arsenaticum (strain DSM 13514 / JCM 11321 / PZ6).